Reading from the N-terminus, the 229-residue chain is Methyltransferase ctvB (229 aa).

It belongs to the methyltransferase superfamily.

Its pathway is mycotoxin biosynthesis. Methyltransferase; part of the gene cluster that mediates the biosynthesis of citreoviridin, an inhibitor of the of F1-ATPase beta-subunit. The HR-PKS ctvA accepts acetyl-CoA as the starter unit and catalyzes eight iterations of malonyl-CoA extension and four iterations of SAM-dependent methylation at C4, C12, C14, and C16. The KR and DH domains selectively act on the first six iterations to generate the hexaene chain. In the last three iterations, the KR and DH domains terminate their functions to yield a beta,delta-diketo ester moiety, which then undergoes intramolecular cyclization to yield an alpha-pyrone intermediate. Subsequently, ctvB methylates the alpha-pyrone hydroxyl group to generate citreomontanin. In order to form the tetrahydrofuran ring with the correct stereochemistry, the terminal alkenes of citreomontanin need to undergo isomerization to yield a (17Z)-hexaene, a step that could be catalyzed by ctvC. The (17Z)-hexaene then undergoes bisepoxidation by ctvC to form a (17R,16R,15S,14R)-bisepoxide moiety. Lastly, ctvD acts as a regioselective hydrolase to form the tetrahydrofuran ring with the substituents in the correct absolute configuration, completing the biosynthesis of citreoviridin. This is Methyltransferase ctvB from Aspergillus terreus (strain NIH 2624 / FGSC A1156).